The sequence spans 133 residues: Small ribosomal subunit protein uS8 (133 aa).

This sequence belongs to the universal ribosomal protein uS8 family. As to quaternary structure, part of the 30S ribosomal subunit. Contacts proteins S5 and S12.

Its function is as follows. One of the primary rRNA binding proteins, it binds directly to 16S rRNA central domain where it helps coordinate assembly of the platform of the 30S subunit. The polypeptide is Small ribosomal subunit protein uS8 (Acaryochloris marina (strain MBIC 11017)).